Reading from the N-terminus, the 440-residue chain is O-glycoside alpha-1,2-mannosyltransferase homolog 4 (440 aa).

At methionine 1 to phenylalanine 35 the chain is on the cytoplasmic side. Residues valine 36–isoleucine 56 form a helical; Signal-anchor for type II membrane protein membrane-spanning segment. The Lumenal portion of the chain corresponds to tyrosine 57–glutamate 440. Glutamate 336 serves as the catalytic Nucleophile.

It belongs to the glycosyltransferase 15 family.

The protein resides in the cytoplasm. Its subcellular location is the nucleus. It is found in the golgi apparatus membrane. In terms of biological role, probable mannosyltransferase involved in O-glycosylation of cell wall and secreted proteins. Transfers an alpha-D-mannosyl residue from GDP-mannose into lipid-linked oligosaccharide, forming an alpha-(1-&gt;2)-D-mannosyl-D-mannose linkage. This chain is O-glycoside alpha-1,2-mannosyltransferase homolog 4 (omh4), found in Schizosaccharomyces pombe (strain 972 / ATCC 24843) (Fission yeast).